Reading from the N-terminus, the 786-residue chain is LPS-assembly protein LptD (786 aa).

The signal sequence occupies residues 1 to 39; that stretch reads MPPKPLFPNVFPGDGAPRKRRLALALLAVPGLVPAVSYA. The interval 767-786 is disordered; it reads PGYTPLPPPPPPMSRFSNYE. Over residues 770 to 779 the composition is skewed to pro residues; sequence TPLPPPPPPM.

The protein belongs to the LptD family. As to quaternary structure, component of the lipopolysaccharide transport and assembly complex. Interacts with LptE and LptA.

The protein localises to the cell outer membrane. In terms of biological role, together with LptE, is involved in the assembly of lipopolysaccharide (LPS) at the surface of the outer membrane. The chain is LPS-assembly protein LptD from Burkholderia cenocepacia (strain HI2424).